Reading from the N-terminus, the 180-residue chain is ATP synthase subunit delta 2 (180 aa).

It belongs to the ATPase delta chain family. F-type ATPases have 2 components, F(1) - the catalytic core - and F(0) - the membrane proton channel. F(1) has five subunits: alpha(3), beta(3), gamma(1), delta(1), epsilon(1). F(0) has three main subunits: a(1), b(2) and c(10-14). The alpha and beta chains form an alternating ring which encloses part of the gamma chain. F(1) is attached to F(0) by a central stalk formed by the gamma and epsilon chains, while a peripheral stalk is formed by the delta and b chains.

The protein localises to the cell inner membrane. F(1)F(0) ATP synthase produces ATP from ADP in the presence of a proton or sodium gradient. F-type ATPases consist of two structural domains, F(1) containing the extramembraneous catalytic core and F(0) containing the membrane proton channel, linked together by a central stalk and a peripheral stalk. During catalysis, ATP synthesis in the catalytic domain of F(1) is coupled via a rotary mechanism of the central stalk subunits to proton translocation. In terms of biological role, this protein is part of the stalk that links CF(0) to CF(1). It either transmits conformational changes from CF(0) to CF(1) or is implicated in proton conduction. The chain is ATP synthase subunit delta 2 from Vibrio campbellii (strain ATCC BAA-1116).